We begin with the raw amino-acid sequence, 244 residues long: Probable ABC transporter ATP-binding protein in ycf23-apcF intergenic region (244 aa).

The ABC transporter domain maps to 9 to 241 (LEINNLTVSY…KLSTLFGEHI (233 aa)). 41 to 48 (GPNGAGKS) is an ATP binding site.

The protein belongs to the ABC transporter superfamily.

Its subcellular location is the plastid. It is found in the cyanelle. The polypeptide is Probable ABC transporter ATP-binding protein in ycf23-apcF intergenic region (Cyanophora paradoxa).